A 385-amino-acid chain; its full sequence is Aldehyde dehydrogenase family 3 member B2 (385 aa).

107–112 serves as a coordination point for NAD(+); the sequence is GSPRVG. Catalysis depends on residues E129 and C163. C382 carries the post-translational modification Cysteine methyl ester. The S-geranylgeranyl cysteine moiety is linked to residue C382. The propeptide at 383-385 is removed in mature form; that stretch reads TLL.

This sequence belongs to the aldehyde dehydrogenase family. Geranylgeranylation is important for localization to lipid droplets and enzyme activity. In terms of tissue distribution, salivary gland. Expressed at protein level in placenta.

The protein resides in the lipid droplet. It catalyses the reaction an aldehyde + NAD(+) + H2O = a carboxylate + NADH + 2 H(+). The catalysed reaction is a long-chain fatty aldehyde + NAD(+) + H2O = a long-chain fatty acid + NADH + 2 H(+). It carries out the reaction a medium-chain fatty aldehyde + NAD(+) + H2O = a medium-chain fatty acid + NADH + 2 H(+). The enzyme catalyses hexadecanoate + NADH + 2 H(+) = hexadecanal + NAD(+) + H2O. It catalyses the reaction octanal + NAD(+) + H2O = octanoate + NADH + 2 H(+). It functions in the pathway alcohol metabolism; ethanol degradation; acetate from ethanol: step 2/2. Its function is as follows. Oxidizes medium and long chain fatty aldehydes in lipid droplets into non-toxic fatty acids. The chain is Aldehyde dehydrogenase family 3 member B2 (ALDH3B2) from Homo sapiens (Human).